We begin with the raw amino-acid sequence, 427 residues long: 3-isopropylmalate dehydratase large subunit (427 aa).

The [4Fe-4S] cluster site is built by Cys308, Cys368, and Cys371.

It belongs to the aconitase/IPM isomerase family. LeuC type 2 subfamily. Heterodimer of LeuC and LeuD. The cofactor is [4Fe-4S] cluster.

It catalyses the reaction (2R,3S)-3-isopropylmalate = (2S)-2-isopropylmalate. The protein operates within amino-acid biosynthesis; L-leucine biosynthesis; L-leucine from 3-methyl-2-oxobutanoate: step 2/4. Its function is as follows. Catalyzes the isomerization between 2-isopropylmalate and 3-isopropylmalate, via the formation of 2-isopropylmaleate. The chain is 3-isopropylmalate dehydratase large subunit from Geobacter metallireducens (strain ATCC 53774 / DSM 7210 / GS-15).